A 784-amino-acid polypeptide reads, in one-letter code: MLAMKDKPWLLLFGLLAALSCLASFGDAAYPYYGTKIGALTRLHHGVSGDVYAVDSRTIFIKKFNYDGEAPAAYFYVGNTARPSNEGAARLRDERGGTASLTRRYRNKDVTLSLPEGKTLRDIKWFSVWCDEFAVNFGDVSIPPNLDFPRPQKISALRGVHGVSSDNIVIVDAQTLLVPNFSYDGEAPDAKFWVGRGQRPTSDGLRIPDENGKENPLRRYERKTIVLTLPEDLTIFDIGHFGVWCEAFTVDFGHVRLPEGLNVPPSLKMLGISPQSKLNCEVLYDDLAFEVRWAVAGESIVVQLVAKLEPNHYMSFGISPNKNISQMIGADAVVAWVDPQTGNGFATDYFLEGKAQCSGGRGACPDTKISEKTNSIRLLNAAMVNGYSIVTYQRSLAATDRLDLPISITGAESVVWAIGPLNDYQEVSFHTFYNKHLHQIEFGRQPKWNCPLPEGARGNSNSSEQEDSAPAAQSSTGGAGYPPAGRPNVEPDEEFYENRAEALHRQPPQRRQETAIITQRRPVPTPKPVNSNGAWDIPAIQCHEPEDGVFYAQMGPTGGKHGYPAITGHVGWGISWYINGLLIPEIHVVRGKTYTFVVEGGNNPDIPAKYHPFYISDDPVGGYEHKREEEKKAVRIYAGVHRSRSGQVTPTGVGRLCNWTPDVEGPPADDYQSFGAYQRTLTLKCDAGEPGVITWKPDRNTPDTVYYHCFTHRYLGWKIHVHDSCDSEAGGLKGAASERHEIRLPAKATVAEPAPVHEDYAGEASVRHETKMASALLRLSRRAY.

Residues 1-28 (MLAMKDKPWLLLFGLLAALSCLASFGDA) form the signal peptide. 2 DM13 domains span residues 34 to 143 (GTKI…VSIP) and 151 to 258 (PQKI…VRLP). Positions 287–419 (LAFEVRWAVA…GAESVVWAIG (133 aa)) constitute a DOMON domain. The segment at 451 to 491 (PLPEGARGNSNSSEQEDSAPAAQSSTGGAGYPPAGRPNVEP) is disordered.

In terms of assembly, interacts with Chro and Mgtor as part of a macromolecular complex forming the spindle matrix. Chro colocalizes with Skeletor (Skel) on the chromosomes at interphase and on spindle during metaphase.

It is found in the cytoplasm. The protein resides in the cytoskeleton. It localises to the spindle. The protein localises to the nucleus. Its subcellular location is the nucleolus. It is found in the chromosome. In terms of biological role, provides structural support to stabilize and organize the microtubule spindle during mitosis (within embryonic somatic cells) and meiosis (within spermatocytes). The role in mitosis regulation depends on the Ran pathway. In Drosophila melanogaster (Fruit fly), this protein is Protein Skeletor, isoforms B/C.